We begin with the raw amino-acid sequence, 176 residues long: Ribose 1,5-bisphosphate phosphokinase PhnN (176 aa).

10 to 17 (GPSGAGKD) contributes to the ATP binding site.

This sequence belongs to the ribose 1,5-bisphosphokinase family.

It carries out the reaction alpha-D-ribose 1,5-bisphosphate + ATP = 5-phospho-alpha-D-ribose 1-diphosphate + ADP. It functions in the pathway metabolic intermediate biosynthesis; 5-phospho-alpha-D-ribose 1-diphosphate biosynthesis; 5-phospho-alpha-D-ribose 1-diphosphate from D-ribose 5-phosphate (route II): step 3/3. In terms of biological role, catalyzes the phosphorylation of ribose 1,5-bisphosphate to 5-phospho-D-ribosyl alpha-1-diphosphate (PRPP). This Methylobacterium radiotolerans (strain ATCC 27329 / DSM 1819 / JCM 2831 / NBRC 15690 / NCIMB 10815 / 0-1) protein is Ribose 1,5-bisphosphate phosphokinase PhnN.